Consider the following 242-residue polypeptide: Sugar fermentation stimulation protein homolog (242 aa).

It belongs to the SfsA family.

The polypeptide is Sugar fermentation stimulation protein homolog (Enterococcus mundtii).